The sequence spans 339 residues: Vomeronasal type-1 receptor A14 (339 aa).

Residues 1-42 (MMGVQICQGMMSEIPFFSPPPQFSYMMNKNIRLHTDSNIRNT) lie on the Extracellular side of the membrane. The chain crosses the membrane as a helical span at residues 43 to 63 (FFTDIGIGISANSLLLLFNIF). The Cytoplasmic segment spans residues 64-75 (KLTRGQRSRLTD). A helical transmembrane segment spans residues 76-96 (LPIGLLSLINLLMLLMAAFIA). At 97–119 (TDTFISWKGWDDIICKFLVYLYR) the chain is on the extracellular side. Cys-111 and Cys-198 are disulfide-bonded. Residues 120-140 (TFRGLSLCTSCLLSVLQAIIL) form a helical membrane-spanning segment. Topologically, residues 141-160 (SPRSSCLAKFKHKPPHHISC) are cytoplasmic. Residues 161 to 181 (AILSLSVLYMFIGSHLLVSII) traverse the membrane as a helical segment. Residues 182–213 (ATPNLTTNDFIHVTQSCSILPMSYLMQCMFST) are Extracellular-facing. An N-linked (GlcNAc...) asparagine glycan is attached at Asn-185. The chain crosses the membrane as a helical span at residues 214–234 (LLAIRDVFLISLMVLSTWYMV). Residues 235-264 (ALLCRHRKQTRHLQGTSLSPKASPEQRATR) are Cytoplasmic-facing. A helical transmembrane segment spans residues 265-285 (SILMLMSLFVLMSVFDSIVCS). The Extracellular portion of the chain corresponds to 286 to 296 (SRTMYLNDPIS). A helical membrane pass occupies residues 297 to 317 (YSIQLFMVHIYATVSPFVFIV). Residues 318–339 (TEKHIVNFLRSVCEGDECLNIH) are Cytoplasmic-facing.

This sequence belongs to the G-protein coupled receptor 1 family.

It is found in the cell membrane. Its function is as follows. Putative pheromone receptor implicated in the regulation of social as well as reproductive behavior. The sequence is that of Vomeronasal type-1 receptor A14 from Rattus norvegicus (Rat).